A 466-amino-acid polypeptide reads, in one-letter code: Tyrosinase HcTyr1 (466 aa).

Positions 43, 78, 87, 211, 215, and 238 each coordinate Cu cation.

It belongs to the tyrosinase family. As to quaternary structure, monomer. Formation of a dimer is observed when the protein is in its holo-form. Cu(2+) serves as cofactor. In vitro, the C-terminal lid-domain is slowly cleaved off in an autoprocessive time dependent manner, leading to the formation of cleaved-HcTyr1. The processing rate is not influenced by factors such as pH and added metal ions.

The enzyme catalyses L-tyrosine + O2 = L-dopaquinone + H2O. The catalysed reaction is 2 L-tyrosine + O2 = 2 L-dopa. It carries out the reaction 2 L-dopa + O2 = 2 L-dopaquinone + 2 H2O. Its activity is regulated as follows. Cleavage of the lid-domain increases activity levels, affinity for substrate and turnover rate. Exhibits high saline tolerance. Functionally, copper-containing oxidase that catalyzes the conversion of L-tyrosine to L-dopa and then to L-dopaquinone. Can use various phenols such as p-coumaric acid, phenol, pyrocatechol, syringol or pyrogallol. Accepts several of the constituents of lignin and potentially participates in lignin functionalization. The chain is Tyrosinase HcTyr1 from Hahella sp. (strain CCB-MM4).